A 173-amino-acid chain; its full sequence is Photosystem I assembly protein Ycf3 (173 aa).

3 TPR repeats span residues 35–68 (AFVYYRDGMSAQADGEYKEALDNYYEALKLEDDA), 72–105 (SYILYNIGIIHGSNGEHERALEYYHEAIELNPNL), and 120–153 (GERAKEEGREDESEALFDKAAEYWKQAIRLAPNN).

Belongs to the Ycf3 family.

The protein resides in the cellular thylakoid membrane. Essential for the assembly of the photosystem I (PSI) complex. May act as a chaperone-like factor to guide the assembly of the PSI subunits. The chain is Photosystem I assembly protein Ycf3 from Gloeothece citriformis (strain PCC 7424) (Cyanothece sp. (strain PCC 7424)).